Here is a 199-residue protein sequence, read N- to C-terminus: NADH-quinone oxidoreductase subunit C (199 aa).

This sequence belongs to the complex I 30 kDa subunit family. As to quaternary structure, NDH-1 is composed of 14 different subunits. Subunits NuoB, C, D, E, F, and G constitute the peripheral sector of the complex.

It localises to the cell inner membrane. It catalyses the reaction a quinone + NADH + 5 H(+)(in) = a quinol + NAD(+) + 4 H(+)(out). Functionally, NDH-1 shuttles electrons from NADH, via FMN and iron-sulfur (Fe-S) centers, to quinones in the respiratory chain. The immediate electron acceptor for the enzyme in this species is believed to be ubiquinone. Couples the redox reaction to proton translocation (for every two electrons transferred, four hydrogen ions are translocated across the cytoplasmic membrane), and thus conserves the redox energy in a proton gradient. This chain is NADH-quinone oxidoreductase subunit C, found in Rhodobacter capsulatus (Rhodopseudomonas capsulata).